Reading from the N-terminus, the 660-residue chain is Acetyl-coenzyme A synthetase (660 aa).

CoA is bound by residues 197-200 (RGGK) and Thr-317. ATP contacts are provided by residues 397 to 399 (GEP), 421 to 426 (DTWWQT), Asp-512, and Arg-528. Position 536 (Ser-536) interacts with CoA. ATP is bound at residue Arg-539. The Mg(2+) site is built by Val-550, His-552, and Val-555. Lys-625 carries the N6-acetyllysine modification.

The protein belongs to the ATP-dependent AMP-binding enzyme family. The cofactor is Mg(2+). Post-translationally, acetylated. Deacetylation by the SIR2-homolog deacetylase activates the enzyme.

It carries out the reaction acetate + ATP + CoA = acetyl-CoA + AMP + diphosphate. Its function is as follows. Catalyzes the conversion of acetate into acetyl-CoA (AcCoA), an essential intermediate at the junction of anabolic and catabolic pathways. AcsA undergoes a two-step reaction. In the first half reaction, AcsA combines acetate with ATP to form acetyl-adenylate (AcAMP) intermediate. In the second half reaction, it can then transfer the acetyl group from AcAMP to the sulfhydryl group of CoA, forming the product AcCoA. This Burkholderia thailandensis (strain ATCC 700388 / DSM 13276 / CCUG 48851 / CIP 106301 / E264) protein is Acetyl-coenzyme A synthetase.